A 210-amino-acid chain; its full sequence is Ion-translocating oxidoreductase complex subunit G (210 aa).

A helical membrane pass occupies residues G9 to V29. The residue at position 175 (T175) is an FMN phosphoryl threonine.

The protein belongs to the RnfG family. The complex is composed of six subunits: RnfA, RnfB, RnfC, RnfD, RnfE and RnfG. It depends on FMN as a cofactor.

It is found in the cell inner membrane. In terms of biological role, part of a membrane-bound complex that couples electron transfer with translocation of ions across the membrane. The polypeptide is Ion-translocating oxidoreductase complex subunit G (Erwinia tasmaniensis (strain DSM 17950 / CFBP 7177 / CIP 109463 / NCPPB 4357 / Et1/99)).